Reading from the N-terminus, the 307-residue chain is Cytochrome c1 2, heme protein, mitochondrial (307 aa).

The N-terminal 64 residues, 1–64, are a transit peptide targeting the mitochondrion; it reads MVGGGVIRQL…LLSFSTVASA (64 aa). Over 65 to 270 the chain is Mitochondrial intermembrane; that stretch reads DEAEHGLECP…EPEMEERKLM (206 aa). The Cytochrome c domain occupies 90–197; it reads ASIRRGHQVY…NGQNYVFALL (108 aa). Cys103, Cys106, His107, and Met226 together coordinate heme c. The chain crosses the membrane as a helical span at residues 271–288; that stretch reads GFKWIFLLSLALLQAAYY. The Mitochondrial matrix portion of the chain corresponds to 289–307; the sequence is RRLKWSVLKSRKLVLDVVN.

This sequence belongs to the cytochrome c family. Component of the ubiquinol-cytochrome c oxidoreductase (cytochrome b-c1 complex, complex III, CIII), a multisubunit enzyme composed of 10 subunits. The complex is composed of 3 respiratory subunits cytochrome b (MT-CYB), cytochrome c1 (CYC1-1 or CYC1-2) and Rieske protein (UCR1-1 or UCR1-2), 2 core protein subunits MPPalpha1 (or MPPalpha2) and MPPB, and 5 low-molecular weight protein subunits QCR7-1 (or QCR7-2), UCRQ-1 (or UCRQ-2), QCR9, UCRY and probably QCR6-1 (or QCR6-2). The complex exists as an obligatory dimer and forms supercomplexes (SCs) in the inner mitochondrial membrane with NADH-ubiquinone oxidoreductase (complex I, CI), resulting in different assemblies (supercomplexes SCI(1)III(2) and SCI(2)III(4)). Binds 1 heme c group covalently per subunit.

The protein resides in the mitochondrion inner membrane. Functionally, component of the ubiquinol-cytochrome c oxidoreductase, a multisubunit transmembrane complex that is part of the mitochondrial electron transport chain which drives oxidative phosphorylation. The respiratory chain contains 3 multisubunit complexes succinate dehydrogenase (complex II, CII), ubiquinol-cytochrome c oxidoreductase (cytochrome b-c1 complex, complex III, CIII) and cytochrome c oxidase (complex IV, CIV), that cooperate to transfer electrons derived from NADH and succinate to molecular oxygen, creating an electrochemical gradient over the inner membrane that drives transmembrane transport and the ATP synthase. The cytochrome b-c1 complex catalyzes electron transfer from ubiquinol to cytochrome c, linking this redox reaction to translocation of protons across the mitochondrial inner membrane, with protons being carried across the membrane as hydrogens on the quinol. In the process called Q cycle, 2 protons are consumed from the matrix, 4 protons are released into the intermembrane space and 2 electrons are passed to cytochrome c. Cytochrome c1 is a catalytic core subunit containing a c-type heme. It transfers electrons from the [2Fe-2S] iron-sulfur cluster of the Rieske protein to cytochrome c. The sequence is that of Cytochrome c1 2, heme protein, mitochondrial (CYC1-2) from Arabidopsis thaliana (Mouse-ear cress).